Here is a 1225-residue protein sequence, read N- to C-terminus: uncharacterized protein (1225 aa).

Residues M1–D15 show a composition bias toward polar residues. Residues M1–S104 form a disordered region. A compositionally biased stretch (basic and acidic residues) spans P16 to L25. The segment covering A43 to D65 has biased composition (polar residues). Residues F167–I187 traverse the membrane as a helical segment. Positions D217–E422 constitute an SMP-LTD domain. C2 domains lie at S413–F534, D559–F668, and K685–M803. A Phosphoserine modification is found at S843. The tract at residues P867–T890 is disordered. Residues S869–T890 show a composition bias toward polar residues. Residues R1019–I1137 enclose the C2 4 domain. Ca(2+) is bound by residues D1053, D1059, D1107, D1109, and D1115.

The cofactor is Ca(2+).

It is found in the endoplasmic reticulum membrane. This is an uncharacterized protein from Schizosaccharomyces pombe (strain 972 / ATCC 24843) (Fission yeast).